The following is a 180-amino-acid chain: ATP synthase subunit b 2 (180 aa).

The chain crosses the membrane as a helical span at residues 33–53 (IFWLLVTLVAIYFLLTRVALP).

Belongs to the ATPase B chain family. As to quaternary structure, F-type ATPases have 2 components, F(1) - the catalytic core - and F(0) - the membrane proton channel. F(1) has five subunits: alpha(3), beta(3), gamma(1), delta(1), epsilon(1). F(0) has three main subunits: a(1), b(2) and c(10-14). The alpha and beta chains form an alternating ring which encloses part of the gamma chain. F(1) is attached to F(0) by a central stalk formed by the gamma and epsilon chains, while a peripheral stalk is formed by the delta and b chains.

The protein resides in the cell inner membrane. Functionally, f(1)F(0) ATP synthase produces ATP from ADP in the presence of a proton or sodium gradient. F-type ATPases consist of two structural domains, F(1) containing the extramembraneous catalytic core and F(0) containing the membrane proton channel, linked together by a central stalk and a peripheral stalk. During catalysis, ATP synthesis in the catalytic domain of F(1) is coupled via a rotary mechanism of the central stalk subunits to proton translocation. In terms of biological role, component of the F(0) channel, it forms part of the peripheral stalk, linking F(1) to F(0). The b'-subunit is a diverged and duplicated form of b found in plants and photosynthetic bacteria. The chain is ATP synthase subunit b 2 (atpF2) from Cereibacter sphaeroides (strain ATCC 17029 / ATH 2.4.9) (Rhodobacter sphaeroides).